Here is a 161-residue protein sequence, read N- to C-terminus: 2-C-methyl-D-erythritol 2,4-cyclodiphosphate synthase (161 aa).

2 residues coordinate a divalent metal cation: Asp-14 and His-16. Residues 14–16 (DVH) and 40–41 (HS) each bind 4-CDP-2-C-methyl-D-erythritol 2-phosphate. His-48 contacts a divalent metal cation. Residues 62 to 64 (DLG), Phe-142, and Arg-145 contribute to the 4-CDP-2-C-methyl-D-erythritol 2-phosphate site.

This sequence belongs to the IspF family. As to quaternary structure, homotrimer. The cofactor is a divalent metal cation.

The enzyme catalyses 4-CDP-2-C-methyl-D-erythritol 2-phosphate = 2-C-methyl-D-erythritol 2,4-cyclic diphosphate + CMP. It functions in the pathway isoprenoid biosynthesis; isopentenyl diphosphate biosynthesis via DXP pathway; isopentenyl diphosphate from 1-deoxy-D-xylulose 5-phosphate: step 4/6. In terms of biological role, involved in the biosynthesis of isopentenyl diphosphate (IPP) and dimethylallyl diphosphate (DMAPP), two major building blocks of isoprenoid compounds. Catalyzes the conversion of 4-diphosphocytidyl-2-C-methyl-D-erythritol 2-phosphate (CDP-ME2P) to 2-C-methyl-D-erythritol 2,4-cyclodiphosphate (ME-CPP) with a corresponding release of cytidine 5-monophosphate (CMP). This Acidothermus cellulolyticus (strain ATCC 43068 / DSM 8971 / 11B) protein is 2-C-methyl-D-erythritol 2,4-cyclodiphosphate synthase.